The chain runs to 198 residues: LexA repressor (198 aa).

The H-T-H motif DNA-binding region spans 28–47 (IRDIAKHFKLTPRGAHIHVL). Residues S120 and K157 each act as for autocatalytic cleavage activity in the active site.

It belongs to the peptidase S24 family. Homodimer.

It carries out the reaction Hydrolysis of Ala-|-Gly bond in repressor LexA.. In terms of biological role, represses a number of genes involved in the response to DNA damage (SOS response), including recA and lexA. In the presence of single-stranded DNA, RecA interacts with LexA causing an autocatalytic cleavage which disrupts the DNA-binding part of LexA, leading to derepression of the SOS regulon and eventually DNA repair. This Thermosipho africanus (strain TCF52B) protein is LexA repressor.